A 118-amino-acid chain; its full sequence is UPF0449 protein C19orf25 homolog (118 aa).

Y63 carries the phosphotyrosine modification. Positions 69–105 (YVAMNQRLQQAGAQLEQKRADLQQAGEELERDISQVG) form a coiled coil.

It belongs to the UPF0449 family.

The chain is UPF0449 protein C19orf25 homolog from Bos taurus (Bovine).